Here is a 131-residue protein sequence, read N- to C-terminus: Small ribosomal subunit protein uS12 (131 aa).

At aspartate 89 the chain carries 3-methylthioaspartic acid.

Belongs to the universal ribosomal protein uS12 family. Part of the 30S ribosomal subunit. Contacts proteins S8 and S17. May interact with IF1 in the 30S initiation complex.

With S4 and S5 plays an important role in translational accuracy. In terms of biological role, interacts with and stabilizes bases of the 16S rRNA that are involved in tRNA selection in the A site and with the mRNA backbone. Located at the interface of the 30S and 50S subunits, it traverses the body of the 30S subunit contacting proteins on the other side and probably holding the rRNA structure together. The combined cluster of proteins S8, S12 and S17 appears to hold together the shoulder and platform of the 30S subunit. This chain is Small ribosomal subunit protein uS12, found in Campylobacter concisus (strain 13826).